Reading from the N-terminus, the 155-residue chain is Ribosomal RNA large subunit methyltransferase H (155 aa).

Residues Leu-72, Gly-103, and 122-127 (LSPLTL) each bind S-adenosyl-L-methionine.

This sequence belongs to the RNA methyltransferase RlmH family. As to quaternary structure, homodimer.

It is found in the cytoplasm. It catalyses the reaction pseudouridine(1915) in 23S rRNA + S-adenosyl-L-methionine = N(3)-methylpseudouridine(1915) in 23S rRNA + S-adenosyl-L-homocysteine + H(+). Specifically methylates the pseudouridine at position 1915 (m3Psi1915) in 23S rRNA. This is Ribosomal RNA large subunit methyltransferase H from Aeromonas salmonicida (strain A449).